A 314-amino-acid chain; its full sequence is Olfactory receptor 5P67 (314 aa).

The Extracellular portion of the chain corresponds to 1–28 (MAFLEDGNHTAVTEFILLGLTDDPVLRV). A glycan (N-linked (GlcNAc...) asparagine) is linked at Asn-8. The helical transmembrane segment at 29–49 (ILFTIILCIYLVTVSGNLSTI) threads the bilayer. At 50–57 (LLIRVSSQ) the chain is on the cytoplasmic side. The chain crosses the membrane as a helical span at residues 58–78 (LHHPMYFFLSHVGSVDIGYSS). Over 79–102 (SVTPNMLVNFLVEKHTIAYLGCGI) the chain is Extracellular. Cys-100 and Cys-192 are oxidised to a cystine. The helical transmembrane segment at 103–123 (QLSSAAFFGTAECFLLATMAY) threads the bilayer. The Cytoplasmic portion of the chain corresponds to 124–136 (DRFVAICNPLLYS). The helical transmembrane segment at 137–157 (TKMSTQTCIQLVVGSYTGGIL) threads the bilayer. The Extracellular segment spans residues 158–199 (NASFAIISFFSFLFCGPNRINHFYCDFAPLVELSCSDINVSV). A helical transmembrane segment spans residues 200–220 (VITTIFSASVTIITVFVIAIS). The Cytoplasmic segment spans residues 221–240 (YTYILITILKMRSTEGRHKA). Residues 241–261 (FSTCTSYLTAVTLFYGTVTFI) traverse the membrane as a helical segment. Residues 262–274 (YVVPKSNYSTDQN) are Extracellular-facing. Asn-268 carries an N-linked (GlcNAc...) asparagine glycan. The helical transmembrane segment at 275-295 (KVASVFYIVVIPMLNPLIYSL) threads the bilayer. The Cytoplasmic portion of the chain corresponds to 296–314 (RNNDIKGALKRQLGKKTFS).

Belongs to the G-protein coupled receptor 1 family.

The protein resides in the cell membrane. Potential odorant receptor. This chain is Olfactory receptor 5P67, found in Mus musculus (Mouse).